Reading from the N-terminus, the 250-residue chain is Triosephosphate isomerase (250 aa).

Residue 9 to 11 (NWK) participates in substrate binding. The active-site Electrophile is H95. The active-site Proton acceptor is E167. Residues G173, S212, and 233 to 234 (GG) each bind substrate.

The protein belongs to the triosephosphate isomerase family. Homodimer.

The protein localises to the cytoplasm. It carries out the reaction D-glyceraldehyde 3-phosphate = dihydroxyacetone phosphate. The protein operates within carbohydrate biosynthesis; gluconeogenesis. It functions in the pathway carbohydrate degradation; glycolysis; D-glyceraldehyde 3-phosphate from glycerone phosphate: step 1/1. In terms of biological role, involved in the gluconeogenesis. Catalyzes stereospecifically the conversion of dihydroxyacetone phosphate (DHAP) to D-glyceraldehyde-3-phosphate (G3P). This chain is Triosephosphate isomerase, found in Psychromonas ingrahamii (strain DSM 17664 / CCUG 51855 / 37).